The primary structure comprises 203 residues: MKLRWFAFLIVLLAGCSSKHDYTNPPWNAKVPVQRAMQWMPISQKAGAAWGVDPQLITAIIAIESGGNPNAVSKSNAIGLMQIKASTSGRDVYRRMGWSGEPTTSELKNPERNISMGAAYLNILETGPLAGIEDPKVLQYALVVSYANGAGALLRTFSSDRKKAISKINDLDADEFLDHVARNHPAPQAPRYIYKLEQALDAM.

The signal sequence occupies residues M1 to G15. C16 is lipidated: N-palmitoyl cysteine. C16 carries S-diacylglycerol cysteine lipidation.

Belongs to the transglycosylase Slt family.

The protein resides in the cell outer membrane. The enzyme catalyses Endolytic cleavage of the (1-&gt;4)-beta-glycosidic linkage between N-acetylmuramic acid (MurNAc) and N-acetylglucosamine (GlcNAc) residues in peptidoglycan with concomitant formation of a 1,6-anhydrobond in the MurNAc residue.. In terms of biological role, murein-degrading enzyme. May play a role in recycling of muropeptides during cell elongation and/or cell division. Preferentially cleaves at a distance of more than two disaccharide units from the ends of the glycan chain. In Escherichia coli O1:K1 / APEC, this protein is Endo-type membrane-bound lytic murein transglycosylase A.